A 236-amino-acid polypeptide reads, in one-letter code: Eukaryotic translation initiation factor 3 subunit J (236 aa).

Residues 1 to 84 form a disordered region; that stretch reads MADDWESAAD…LREEEAEAER (84 aa). A compositionally biased stretch (acidic residues) spans 28-46; that stretch reads GEDEDEDIKDSWEDEEEKK. Composition is skewed to basic and acidic residues over residues 47 to 58 and 68 to 77; these read DEEKPTKTEAPA and AKLEQQALRE.

Belongs to the eIF-3 subunit J family. As to quaternary structure, component of the eukaryotic translation initiation factor 3 (eIF-3) complex. The eIF-3 complex interacts with pix.

It is found in the cytoplasm. Its function is as follows. Component of the eukaryotic translation initiation factor 3 (eIF-3) complex, which is involved in protein synthesis of a specialized repertoire of mRNAs and, together with other initiation factors, stimulates binding of mRNA and methionyl-tRNAi to the 40S ribosome. The eIF-3 complex specifically targets and initiates translation of a subset of mRNAs involved in cell proliferation. In Drosophila sechellia (Fruit fly), this protein is Eukaryotic translation initiation factor 3 subunit J.